Reading from the N-terminus, the 126-residue chain is Holo-[acyl-carrier-protein] synthase (126 aa).

The Mg(2+) site is built by aspartate 9 and glutamate 58.

This sequence belongs to the P-Pant transferase superfamily. AcpS family. It depends on Mg(2+) as a cofactor.

Its subcellular location is the cytoplasm. It catalyses the reaction apo-[ACP] + CoA = holo-[ACP] + adenosine 3',5'-bisphosphate + H(+). Its function is as follows. Transfers the 4'-phosphopantetheine moiety from coenzyme A to a Ser of acyl-carrier-protein. This is Holo-[acyl-carrier-protein] synthase from Klebsiella pneumoniae subsp. pneumoniae (strain ATCC 700721 / MGH 78578).